A 183-amino-acid polypeptide reads, in one-letter code: Transposon gamma-delta resolvase (183 aa).

The region spanning 2–137 is the Resolvase/invertase-type recombinase catalytic domain; sequence RLFGYARVST…EGRQEAMAKG (136 aa). S10 acts as the O-(5'-phospho-DNA)-serine intermediate in catalysis. Residues 161-180 constitute a DNA-binding region (H-T-H motif); sequence ASHISKTMNIARSTVYKVIN.

It belongs to the site-specific recombinase resolvase family.

Its function is as follows. This protein catalyzes the site-specific recombination of the transposon and also regulates its frequency of transposition. In Escherichia coli (strain K12), this protein is Transposon gamma-delta resolvase (tnpR).